A 309-amino-acid chain; its full sequence is Probable WRKY transcription factor 26 (309 aa).

The tract at residues 1–24 (MGSFDRQRAVPKFKTATPSPLPLS) is disordered. Positions 111 to 176 (SSNKTSDDGY…YKGSHNHPKP (66 aa)) form a DNA-binding region, WRKY 1. Cysteine 142, cysteine 147, histidine 171, and histidine 173 together coordinate Zn(2+). The segment at 167–210 (YKGSHNHPKPQSTKRSSSTAIAAHQNSSNGDGKDIGEDETEAKR) is disordered. Over residues 175-196 (KPQSTKRSSSTAIAAHQNSSNG) the composition is skewed to polar residues. The span at 197 to 210 (DGKDIGEDETEAKR) shows a compositional bias: basic and acidic residues. The segment at residues 228–293 (SDIDILDDGY…YEGKHKHQIP (66 aa)) is a DNA-binding region (WRKY 2). 4 residues coordinate Zn(2+): cysteine 259, cysteine 264, histidine 288, and histidine 290.

Belongs to the WRKY group I family. Interacts with VQ10.

It is found in the nucleus. Its function is as follows. Transcription factor. Interacts specifically with the W box (5'-(T)TGAC[CT]-3'), a frequently occurring elicitor-responsive cis-acting element. Functions with WRKY25 and WRKY33 as positive regulator of plant thermotolerance by partially participating in ethylene-response signal transduction pathway. The protein is Probable WRKY transcription factor 26 (WRKY26) of Arabidopsis thaliana (Mouse-ear cress).